The primary structure comprises 969 residues: Glycine dehydrogenase (decarboxylating) (969 aa).

Lys-716 is subject to N6-(pyridoxal phosphate)lysine.

This sequence belongs to the GcvP family. In terms of assembly, the glycine cleavage system is composed of four proteins: P, T, L and H. Pyridoxal 5'-phosphate is required as a cofactor.

The catalysed reaction is N(6)-[(R)-lipoyl]-L-lysyl-[glycine-cleavage complex H protein] + glycine + H(+) = N(6)-[(R)-S(8)-aminomethyldihydrolipoyl]-L-lysyl-[glycine-cleavage complex H protein] + CO2. Its function is as follows. The glycine cleavage system catalyzes the degradation of glycine. The P protein binds the alpha-amino group of glycine through its pyridoxal phosphate cofactor; CO(2) is released and the remaining methylamine moiety is then transferred to the lipoamide cofactor of the H protein. The chain is Glycine dehydrogenase (decarboxylating) from Shewanella woodyi (strain ATCC 51908 / MS32).